Reading from the N-terminus, the 491-residue chain is Protein nucleotidyltransferase YdiU (491 aa).

Residues glycine 88, glycine 90, arginine 91, lysine 111, aspartate 123, glycine 124, arginine 174, and arginine 181 each coordinate ATP. The Proton acceptor role is filled by aspartate 250. Mg(2+) contacts are provided by asparagine 251 and aspartate 260. Residue aspartate 260 coordinates ATP.

It belongs to the SELO family. Mg(2+) serves as cofactor. Mn(2+) is required as a cofactor.

It carries out the reaction L-seryl-[protein] + ATP = 3-O-(5'-adenylyl)-L-seryl-[protein] + diphosphate. The enzyme catalyses L-threonyl-[protein] + ATP = 3-O-(5'-adenylyl)-L-threonyl-[protein] + diphosphate. The catalysed reaction is L-tyrosyl-[protein] + ATP = O-(5'-adenylyl)-L-tyrosyl-[protein] + diphosphate. It catalyses the reaction L-histidyl-[protein] + UTP = N(tele)-(5'-uridylyl)-L-histidyl-[protein] + diphosphate. It carries out the reaction L-seryl-[protein] + UTP = O-(5'-uridylyl)-L-seryl-[protein] + diphosphate. The enzyme catalyses L-tyrosyl-[protein] + UTP = O-(5'-uridylyl)-L-tyrosyl-[protein] + diphosphate. Its function is as follows. Nucleotidyltransferase involved in the post-translational modification of proteins. It can catalyze the addition of adenosine monophosphate (AMP) or uridine monophosphate (UMP) to a protein, resulting in modifications known as AMPylation and UMPylation. This Bradyrhizobium sp. (strain BTAi1 / ATCC BAA-1182) protein is Protein nucleotidyltransferase YdiU.